The primary structure comprises 1207 residues: Disease resistance protein RPP2B (1207 aa).

Residues 15–180 (CEFDVFVSFR…EIVKNTFRML (166 aa)) enclose the TIR domain. Glu89 is a catalytic residue. Residues 201–445 (ELEKLLMFDN…FLDIACFFRS (245 aa)) enclose the NB-ARC domain. LRR repeat units follow at residues 607 to 630 (PKEL…EKNT), 653 to 676 (AKNL…VKQM), 677 to 699 (NELI…GFKI), 720 to 743 (SESI…IESL), 744 to 767 (HSLI…LYKL), 769 to 791 (SLQE…KEKM), 792 to 815 (ECLE…CLSN), 840 to 862 (NSFL…KFSS), and 863 to 886 (LRSL…IEKL).

It belongs to the disease resistance TIR-NB-LRR family.

The catalysed reaction is NAD(+) + H2O = ADP-D-ribose + nicotinamide + H(+). Its function is as follows. Disease resistance protein that cooperates with RPP2A to confer resistance to Hyaloperonospora parasitica isolate Cala2. The sequence is that of Disease resistance protein RPP2B from Arabidopsis thaliana (Mouse-ear cress).